The sequence spans 579 residues: Zinc finger protein 382 (579 aa).

Basic residues predominate over residues 1-12 (MGRPGRKPRGRA). Residues 1–37 (MGRPGRKPRGRARPGLFPFPKEELRQGGSSPANLNAM) are disordered. A mediates interaction with TRIM28 region spans residues 12–135 (ARPGLFPFPK…DKPPKSIVII (124 aa)). The span at 27–36 (GGSSPANLNA) shows a compositional bias: polar residues. Represses transcription stretches follow at residues 40 to 81 (GPVS…FISV) and 105 to 240 (IFPS…PEQR). The 72-residue stretch at 42–113 (VSFKDVTVDF…RIFPSQSYLE (72 aa)) folds into the KRAB domain. A C2H2-type 1; degenerate zinc finger spans residues 241 to 263 (FEYNKCDSSFLMTGVEFPHGRAH). C2H2-type zinc fingers lie at residues 325–347 (FQCPYCGNSFRRKSYLIEHERIH), 353–375 (YICCQCGRAFRQKTALTLHEKTH), 381–403 (YLCVDCGKSFRQKATLTRHHKAH), 409–431 (YECTQCGSAFGKKSYLIDHQRTH), 437–459 (YQCTECGKAFIQKTTLTVHQRTH), 465–487 (YICSECGKSFCQKTTLTLHQRIH), 493–515 (YICSDCGKSFRQKAILTVHYRIH), 521–543 (NGCPQCGKAFSRKSNLIRHQKIH), and 549–571 (YECQECGKFFSCKSNLITHQKTH). Positions 325 to 579 (FQCPYCGNSF…THKTETMRFQ (255 aa)) are required for transcriptional repression activity; probably mediates sequence-specific DNA-binding.

It belongs to the krueppel C2H2-type zinc-finger protein family. In terms of assembly, interacts with TRIM28; enhances the transcriptional repressor activity.

It is found in the nucleus. In terms of biological role, functions as a sequence-specific transcriptional repressor. The protein is Zinc finger protein 382 (Znf382) of Mus musculus (Mouse).